Here is a 309-residue protein sequence, read N- to C-terminus: Aspartate carbamoyltransferase catalytic subunit (309 aa).

Carbamoyl phosphate is bound by residues Arg55 and Thr56. L-aspartate is bound at residue Lys85. Positions 106, 135, and 138 each coordinate carbamoyl phosphate. Residues Arg168 and Arg230 each contribute to the L-aspartate site. Carbamoyl phosphate is bound by residues Leu268 and Pro269.

This sequence belongs to the aspartate/ornithine carbamoyltransferase superfamily. ATCase family. Heterododecamer (2C3:3R2) of six catalytic PyrB chains organized as two trimers (C3), and six regulatory PyrI chains organized as three dimers (R2).

The catalysed reaction is carbamoyl phosphate + L-aspartate = N-carbamoyl-L-aspartate + phosphate + H(+). Its pathway is pyrimidine metabolism; UMP biosynthesis via de novo pathway; (S)-dihydroorotate from bicarbonate: step 2/3. In terms of biological role, catalyzes the condensation of carbamoyl phosphate and aspartate to form carbamoyl aspartate and inorganic phosphate, the committed step in the de novo pyrimidine nucleotide biosynthesis pathway. In Vibrio vulnificus (strain YJ016), this protein is Aspartate carbamoyltransferase catalytic subunit.